The primary structure comprises 258 residues: Fibroblast growth factor-binding protein 3 (258 aa).

The N-terminal stretch at 1–26 is a signal peptide; sequence MTPPKLRASLSPSLLLLLSGCLLAAA. 2 disulfides stabilise this stretch: Cys59/Cys80 and Cys90/Cys124. Residues 146 to 231 are disordered; sequence RLVPRASPPA…GTGPDPDGLD (86 aa). Residues 186-197 show a composition bias toward pro residues; sequence GTPPPQSAPPKE. Basic and acidic residues predominate over residues 198 to 209; sequence NPSERKTNEGKR. Cysteines 241 and 249 form a disulfide.

This sequence belongs to the fibroblast growth factor-binding protein family. Interacts with FGF2.

The protein localises to the secreted. Heparin-binding protein which binds to FGF2, prevents binding of FGF2 to heparin and probably inhibits immobilization of FGF2 on extracellular matrix glycosaminoglycans, allowing its release and subsequent activation of FGFR signaling which leads to increased vascular permeability. In Homo sapiens (Human), this protein is Fibroblast growth factor-binding protein 3 (FGFBP3).